Reading from the N-terminus, the 327-residue chain is Methionyl-tRNA formyltransferase (327 aa).

(6S)-5,6,7,8-tetrahydrofolate is bound at residue serine 122–proline 125.

It belongs to the Fmt family.

The catalysed reaction is L-methionyl-tRNA(fMet) + (6R)-10-formyltetrahydrofolate = N-formyl-L-methionyl-tRNA(fMet) + (6S)-5,6,7,8-tetrahydrofolate + H(+). Its function is as follows. Attaches a formyl group to the free amino group of methionyl-tRNA(fMet). The formyl group appears to play a dual role in the initiator identity of N-formylmethionyl-tRNA by promoting its recognition by IF2 and preventing the misappropriation of this tRNA by the elongation apparatus. The chain is Methionyl-tRNA formyltransferase from Ralstonia pickettii (strain 12J).